Consider the following 712-residue polypeptide: Patatin-like phospholipase domain-containing protein AFUA_1G04970 (712 aa).

Basic and acidic residues predominate over residues 1 to 13 (MTSDEKSATRDIY). The interval 1-20 (MTSDEKSATRDIYDPNTLPD) is disordered. The chain crosses the membrane as a helical span at residues 85 to 105 (WPFLFTVFAWITVLGFAYTLT). A PNPLA domain is found at 275-466 (LCLSGGATFA…RTDIPIKALN (192 aa)). Positions 306 to 310 (GTSGG) match the GXSXG motif. S308 acts as the Nucleophile in catalysis. The active-site Proton acceptor is the D453. The disordered stretch occupies residues 628 to 688 (RRRQDRAQEH…PDARRSSMFE (61 aa)). 2 stretches are compositionally biased toward basic and acidic residues: residues 632–646 (DRAQ…ERLD) and 652–664 (RQSD…HYAE). The span at 667-676 (DSLSATSSRP) shows a compositional bias: polar residues. Positions 677-688 (HTPDARRSSMFE) are enriched in basic and acidic residues.

The protein belongs to the PLPL family.

Its subcellular location is the membrane. Probable lipid hydrolase. The polypeptide is Patatin-like phospholipase domain-containing protein AFUA_1G04970 (Aspergillus fumigatus (strain ATCC MYA-4609 / CBS 101355 / FGSC A1100 / Af293) (Neosartorya fumigata)).